The primary structure comprises 115 residues: Protein TrbA (115 aa).

A run of 4 helical transmembrane segments spans residues 5–25, 39–59, 60–80, and 91–111; these read YLKM…GYFF, LVFL…LWFL, CGAI…AALP, and IFIC…FIRG.

Its subcellular location is the cell membrane. The sequence is that of Protein TrbA (trbA) from Escherichia coli (strain K12).